The sequence spans 358 residues: MAERQEEQRGSPPLRAEGKADAEVKLILYHWTHSFSSQKVRLVIAEKALKCEEHDVSLPLSEHNEPWFMRLNSTGEVPVLIHGENIICEATQIIDYLEQTFLDERTPRLMPDKESMYYPRVQHYRELLDSLPMDAYTHGCILHPELTVDSMIPAYATTRIRSQIGNTESELKKLAEENPDLQEAYIAKQKRLKSKLLDHDNVKYLKKILDELEKVLDQVETELQRRNEETPEEGQQPWLCGESFTLADVSLAVTLHRLKFLGFARRNWGNGKRPNLETYYERVLKRKTFNKVLGHVNNILISAVLPTAFRVAKKRAPKVLGTTLVVGLLAGVGYFAFMLFRKRLGSMILAFRPRPNYF.

In terms of domain architecture, GST N-terminal spans 24 to 105 (VKLILYHWTH…YLEQTFLDER (82 aa)). Glycyl lysine isopeptide (Lys-Gly) (interchain with G-Cter in ubiquitin) cross-links involve residues K50, K172, K173, K188, and K190. One can recognise a GST C-terminal domain in the interval 153 to 309 (PAYATTRIRS…LISAVLPTAF (157 aa)). K203 carries the N6-acetyllysine; alternate modification. Residue K203 forms a Glycyl lysine isopeptide (Lys-Gly) (interchain with G-Cter in ubiquitin); alternate linkage. Residues K206, K207, and K214 each participate in a glycyl lysine isopeptide (Lys-Gly) (interchain with G-Cter in ubiquitin) cross-link. 2 helical membrane-spanning segments follow: residues 292 to 312 (VLGH…FRVA) and 320 to 340 (LGTT…FMLF). The interval 320–358 (LGTTLVVGLLAGVGYFAFMLFRKRLGSMILAFRPRPNYF) is required for mitochondrial localization.

The protein belongs to the GST superfamily. Homodimer. In terms of processing, ubiquitinated by PRKN during mitophagy, leading to its degradation and enhancement of mitophagy. Deubiquitinated by USP30. As to expression, highly expressed in whole brain and spinal cord. Predominant expression in central tissues of the nervous system not only in neurons but also in Schwann cells.

Its subcellular location is the mitochondrion outer membrane. It is found in the cytoplasm. In terms of biological role, regulates the mitochondrial network by promoting mitochondrial fission. This Homo sapiens (Human) protein is Ganglioside-induced differentiation-associated protein 1 (GDAP1).